We begin with the raw amino-acid sequence, 232 residues long: Peptidoglycan-recognition protein LB (232 aa).

A signal peptide spans 1–15 (MTALGLVLLSMMGYS). One can recognise an N-acetylmuramoyl-L-alanine amidase domain in the interval 53-179 (APYVIIHHSY…RQVRDTECPG (127 aa)). A Zn(2+)-binding site is contributed by histidine 59. A disulfide bond links cysteine 67 and cysteine 73. 2 residues coordinate Zn(2+): histidine 169 and cysteine 177. N-linked (GlcNAc...) asparagine glycosylation is present at asparagine 196. The interval 213-232 (HPQAAAPQKPHQSPPAAPKV) is disordered.

Belongs to the N-acetylmuramoyl-L-alanine amidase 2 family. In terms of assembly, monomer. The cofactor is Zn(2+). In terms of tissue distribution, widely expressed.

The protein localises to the secreted. It carries out the reaction Hydrolyzes the link between N-acetylmuramoyl residues and L-amino acid residues in certain cell-wall glycopeptides.. Its function is as follows. N-acetylmuramyl-L-alanine amidase involved in innate immunity by degrading bacterial peptidoglycans (PGN). Probably plays a scavenger role by digesting biologically active PGN into biologically inactive fragments. Has no direct bacteriolytic activity. The sequence is that of Peptidoglycan-recognition protein LB (PGRP-LB) from Drosophila melanogaster (Fruit fly).